Reading from the N-terminus, the 195-residue chain is uncharacterized protein (195 aa).

Polar residues predominate over residues 1–11; sequence MDYIVSPTSSE. The disordered stretch occupies residues 1-118; that stretch reads MDYIVSPTSS…LDTEGGFVLS (118 aa). A compositionally biased stretch (acidic residues) spans 35-46; it reads SPEDITDSDEQN. Low complexity predominate over residues 47–63; sequence DTTTTTSEMSSTSSVPS. Residues 82-93 are compositionally biased toward basic and acidic residues; that stretch reads SDSKLIFDSDNK. Residues 94–110 show a composition bias toward acidic residues; it reads DQDDEDDEDDEELEGLD.

This is an uncharacterized protein from Acanthamoeba polyphaga mimivirus (APMV).